A 143-amino-acid polypeptide reads, in one-letter code: Antiholin-like protein LrgA (143 aa).

4 consecutive transmembrane segments (helical) span residues 6–26, 30–50, 61–81, and 97–117; these read VYSF…SNII, LPIP…LLCL, LGTA…ISVI, and VIVV…QFIL.

Belongs to the CidA/LrgA family. LrgA subfamily.

It localises to the cell membrane. Its function is as follows. Inhibits the expression or activity of extracellular murein hydrolases by interacting, possibly with LrgB, with the holin-like protein CidA. The LrgAB and CidA proteins may affect the proton motive force of the membrane. May be involved in programmed cell death (PCD), possibly triggering PCD in response to antibiotics and environmental stresses. This Bacillus anthracis (strain A0248) protein is Antiholin-like protein LrgA.